The chain runs to 443 residues: 3-ketoacyl-CoA thiolase 1, peroxisomal (443 aa).

The N-terminal 30 residues, 1–30 (MEKATERQRILLRHLQPSSSSDASLSASAC), are a transit peptide targeting the peroxisome. The active-site Acyl-thioester intermediate is the Cys130. Catalysis depends on proton acceptor residues His385 and Cys417.

Belongs to the thiolase-like superfamily. Thiolase family. In terms of assembly, homodimer. In terms of tissue distribution, low levels in seedlings and leaves.

Its subcellular location is the peroxisome. The catalysed reaction is an acyl-CoA + acetyl-CoA = a 3-oxoacyl-CoA + CoA. The protein operates within lipid metabolism; fatty acid metabolism. Involved in fatty-acid beta-oxidation prior to gluconeogenesis during germination and subsequent seedling growth. Implicated in jasmonic acid (JA) biosynthesis. This Arabidopsis thaliana (Mouse-ear cress) protein is 3-ketoacyl-CoA thiolase 1, peroxisomal (KAT1).